A 173-amino-acid chain; its full sequence is Dual-action ribosomal maturation protein DarP (173 aa).

This sequence belongs to the DarP family.

The protein localises to the cytoplasm. In terms of biological role, member of a network of 50S ribosomal subunit biogenesis factors which assembles along the 30S-50S interface, preventing incorrect 23S rRNA structures from forming. Promotes peptidyl transferase center (PTC) maturation. This Pseudomonas fluorescens (strain ATCC BAA-477 / NRRL B-23932 / Pf-5) protein is Dual-action ribosomal maturation protein DarP.